We begin with the raw amino-acid sequence, 388 residues long: Xylose isomerase (388 aa).

Active-site residues include H54 and D57. E181, E217, H220, D245, D255, D257, and D287 together coordinate Mg(2+).

Belongs to the xylose isomerase family. Homotetramer. Requires Mg(2+) as cofactor.

It localises to the cytoplasm. It carries out the reaction alpha-D-xylose = alpha-D-xylulofuranose. Its function is as follows. Involved in D-xylose catabolism. The polypeptide is Xylose isomerase (xylA) (Streptomyces rubiginosus).